We begin with the raw amino-acid sequence, 539 residues long: G protein-coupled receptor associated sorting protein 3 (539 aa).

Positions 1–10 (MTGSKNKARA) are enriched in basic residues. 2 disordered regions span residues 1–111 (MTGS…DSWF) and 132–170 (NSVA…EEEE). 2 stretches are compositionally biased toward basic and acidic residues: residues 66 to 80 (VVAE…ESKA) and 88 to 106 (FNHK…DKPS). A compositionally biased stretch (polar residues) spans 132–146 (NSVAKCENKPSTSIQ).

The protein belongs to the GPRASP family. In terms of assembly, homodimer.

It localises to the cytoplasm. The protein localises to the nucleus. In terms of biological role, survival and differentiation promoting protein that plays a role in the regulation of neurosynaptogenesis. Induces phosphatase PP2A activity which results in APP dephosphorylation and inhibits BACE1-mediated processing of APP. In Rattus norvegicus (Rat), this protein is G protein-coupled receptor associated sorting protein 3 (Gprasp3).